Here is a 145-residue protein sequence, read N- to C-terminus: Actin-depolymerizing factor 11 (145 aa).

The 135-residue stretch at 11–145 (SSGIGVAAEC…DIELLRERAH (135 aa)) folds into the ADF-H domain.

This sequence belongs to the actin-binding proteins ADF family.

In terms of biological role, actin-depolymerizing protein. Severs actin filaments (F-actin) and binds to actin monomers. This chain is Actin-depolymerizing factor 11 (ADF11), found in Oryza sativa subsp. japonica (Rice).